Here is a 164-residue protein sequence, read N- to C-terminus: Thiol peroxidase (164 aa).

The region spanning 16–162 (LQVGDIAKDF…YEAAINAAKI (147 aa)) is the Thioredoxin domain. Residue Cys-58 is the Cysteine sulfenic acid (-SOH) intermediate of the active site. Residues Cys-58 and Cys-92 are joined by a disulfide bond.

It belongs to the peroxiredoxin family. Tpx subfamily. As to quaternary structure, homodimer.

It catalyses the reaction a hydroperoxide + [thioredoxin]-dithiol = an alcohol + [thioredoxin]-disulfide + H2O. In terms of biological role, thiol-specific peroxidase that catalyzes the reduction of hydrogen peroxide and organic hydroperoxides to water and alcohols, respectively. Plays a role in cell protection against oxidative stress by detoxifying peroxides. This Streptococcus agalactiae serotype V (strain ATCC BAA-611 / 2603 V/R) protein is Thiol peroxidase.